A 487-amino-acid chain; its full sequence is Sodium-coupled neutral amino acid symporter 1 (487 aa).

At M1–G74 the chain is on the cytoplasmic side. S6 carries the post-translational modification Phosphoserine. T11 is modified (phosphothreonine). Phosphoserine occurs at positions 25, 28, 49, and 52. T54 carries the phosphothreonine modification. At S56 the chain carries Phosphoserine. Residues M75–A97 traverse the membrane as a helical segment. Residues N98 to T112 lie on the Extracellular side of the membrane. Residues L113–V133 traverse the membrane as a helical segment. Residues Y134–K147 lie on the Cytoplasmic side of the membrane. A helical membrane pass occupies residues F148 to I168. At V169 to S188 the chain is on the extracellular side. Residues A189–L211 form a helical membrane-spanning segment. Topologically, residues L212–G216 are cytoplasmic. Residues Y217 to I237 traverse the membrane as a helical segment. Over Y238–T275 the chain is Extracellular. Residues C245 and C264 are joined by a disulfide bond. Residues N251 and N257 are each glycosylated (N-linked (GlcNAc...) asparagine). The helical transmembrane segment at V276 to Y296 threads the bilayer. The Cytoplasmic portion of the chain corresponds to S297–N312. A helical membrane pass occupies residues I313–F333. Residues Y334–D350 lie on the Extracellular side of the membrane. Residues I351–L371 form a helical membrane-spanning segment. Topologically, residues F372 to H393 are cytoplasmic. Residues T394 to M414 traverse the membrane as a helical segment. At K415–D416 the chain is on the extracellular side. A helical membrane pass occupies residues I417–L437. Over Y438–R452 the chain is Cytoplasmic. A helical transmembrane segment spans residues I453 to V473. The Extracellular portion of the chain corresponds to I474 to H487.

Belongs to the amino acid/polyamine transporter 2 family. N-glycosylation plays an important role in the L-glutamine transport. Expressed in the cerebral cortex by pyramidal and GABAergic neurons, astrocytes and other non-neuronal cells (at protein level). Expressed in placenta, heart, lung, skeletal muscle, spleen, stomach and testis. Highly expressed in cytotrophoblast cells from term placenta.

It is found in the cell membrane. It carries out the reaction L-glutamine(in) + Na(+)(in) = L-glutamine(out) + Na(+)(out). The catalysed reaction is L-alanine(in) + Na(+)(in) = L-alanine(out) + Na(+)(out). It catalyses the reaction L-asparagine(in) + Na(+)(in) = L-asparagine(out) + Na(+)(out). The enzyme catalyses L-histidine(in) + Na(+)(in) = L-histidine(out) + Na(+)(out). It carries out the reaction L-serine(in) + Na(+)(in) = L-serine(out) + Na(+)(out). The catalysed reaction is L-cysteine(in) + Na(+)(in) = L-cysteine(out) + Na(+)(out). It catalyses the reaction L-methionine(in) + Na(+)(in) = L-methionine(out) + Na(+)(out). The enzyme catalyses glycine(in) + Na(+)(in) = glycine(out) + Na(+)(out). It carries out the reaction L-threonine(in) + Na(+)(in) = L-threonine(out) + Na(+)(out). The catalysed reaction is L-proline(in) + Na(+)(in) = L-proline(out) + Na(+)(out). With respect to regulation, inhibited by alpha-(methylamino)isobutyric acid (MeAIB). Inhibited by lithium, potassium, choline ions, N-methylglucamine. The pH dependence has an allosteric effect on the transport. Symporter that cotransports short-chain neutral amino acids and sodium ions from the extraccellular to the intracellular side of the cell membrane. The transport is elctrogenic, pH dependent and driven by the Na(+) electrochemical gradient. Participates in the astroglia-derived glutamine transport into GABAergic interneurons for neurotransmitter GABA de novo synthesis. May also contributes to amino acid transport in placental trophoblasts. Also regulates synaptic plasticity. This chain is Sodium-coupled neutral amino acid symporter 1 (SLC38A1), found in Homo sapiens (Human).